The primary structure comprises 585 residues: Proline--tRNA ligase (585 aa).

Belongs to the class-II aminoacyl-tRNA synthetase family. ProS type 1 subfamily. As to quaternary structure, homodimer.

Its subcellular location is the cytoplasm. The catalysed reaction is tRNA(Pro) + L-proline + ATP = L-prolyl-tRNA(Pro) + AMP + diphosphate. Its function is as follows. Catalyzes the attachment of proline to tRNA(Pro) in a two-step reaction: proline is first activated by ATP to form Pro-AMP and then transferred to the acceptor end of tRNA(Pro). As ProRS can inadvertently accommodate and process non-cognate amino acids such as alanine and cysteine, to avoid such errors it has two additional distinct editing activities against alanine. One activity is designated as 'pretransfer' editing and involves the tRNA(Pro)-independent hydrolysis of activated Ala-AMP. The other activity is designated 'posttransfer' editing and involves deacylation of mischarged Ala-tRNA(Pro). The misacylated Cys-tRNA(Pro) is not edited by ProRS. This chain is Proline--tRNA ligase, found in Nocardia farcinica (strain IFM 10152).